Consider the following 283-residue polypeptide: Nucleotide-binding protein ABBFA_002973 (283 aa).

Glycine 9–serine 16 contacts ATP. Aspartate 59–serine 62 serves as a coordination point for GTP.

Belongs to the RapZ-like family.

Functionally, displays ATPase and GTPase activities. This chain is Nucleotide-binding protein ABBFA_002973, found in Acinetobacter baumannii (strain AB307-0294).